The chain runs to 23 residues: Melittin-related peptide AK-23-1 (23 aa).

Lys23 bears the Lysine amide mark.

Expressed by the skin glands.

The protein resides in the secreted. This Rana arvalis (Moor frog) protein is Melittin-related peptide AK-23-1.